The chain runs to 141 residues: 2S seed storage albumin protein (141 aa).

The N-terminal stretch at 1 to 22 is a signal peptide; sequence MARLTSIIALFAVALLVADAYA. A propeptide spanning residues 23–35 is cleaved from the precursor; it reads YRTTITTVEVEEN. 4 disulfide bridges follow: C43–C97, C55–C86, C87–C132, and C99–C139.

This sequence belongs to the 2S seed storage albumins family. As to quaternary structure, the mature protein consists of a small and a large chain linked by 2 disulfide bonds.

The protein localises to the vacuole. It localises to the aleurone grain. Functionally, this is a 2S seed storage protein. This Cucurbita maxima (Pumpkin) protein is 2S seed storage albumin protein.